The chain runs to 100 residues: NAD(P)H-quinone oxidoreductase subunit 4L, chloroplastic (100 aa).

A run of 3 helical transmembrane segments spans residues 1–21 (MLEH…YGLV), 31–51 (MCLE…SNFF), and 63–83 (IFVI…VLAI).

Belongs to the complex I subunit 4L family. In terms of assembly, NDH is composed of at least 16 different subunits, 5 of which are encoded in the nucleus.

The protein resides in the plastid. It is found in the chloroplast thylakoid membrane. It carries out the reaction a plastoquinone + NADH + (n+1) H(+)(in) = a plastoquinol + NAD(+) + n H(+)(out). It catalyses the reaction a plastoquinone + NADPH + (n+1) H(+)(in) = a plastoquinol + NADP(+) + n H(+)(out). In terms of biological role, NDH shuttles electrons from NAD(P)H:plastoquinone, via FMN and iron-sulfur (Fe-S) centers, to quinones in the photosynthetic chain and possibly in a chloroplast respiratory chain. The immediate electron acceptor for the enzyme in this species is believed to be plastoquinone. Couples the redox reaction to proton translocation, and thus conserves the redox energy in a proton gradient. The sequence is that of NAD(P)H-quinone oxidoreductase subunit 4L, chloroplastic from Cryptomeria japonica (Japanese cedar).